We begin with the raw amino-acid sequence, 400 residues long: Acetate kinase (400 aa).

Residue Asn-9 coordinates Mg(2+). Lys-16 serves as a coordination point for ATP. Arg-90 lines the substrate pocket. Catalysis depends on Asp-147, which acts as the Proton donor/acceptor. ATP contacts are provided by residues 207 to 211, 282 to 284, and 330 to 334; these read HIGNG, DLR, and GIGEN. Glu-385 lines the Mg(2+) pocket.

This sequence belongs to the acetokinase family. As to quaternary structure, homodimer. Mg(2+) is required as a cofactor. The cofactor is Mn(2+).

Its subcellular location is the cytoplasm. It carries out the reaction acetate + ATP = acetyl phosphate + ADP. It participates in metabolic intermediate biosynthesis; acetyl-CoA biosynthesis; acetyl-CoA from acetate: step 1/2. Catalyzes the formation of acetyl phosphate from acetate and ATP. Can also catalyze the reverse reaction. In Staphylococcus aureus (strain JH1), this protein is Acetate kinase.